Consider the following 265-residue polypeptide: tRNA pseudouridine synthase A (265 aa).

The Nucleophile role is filled by Asp-58. Tyr-116 lines the substrate pocket.

This sequence belongs to the tRNA pseudouridine synthase TruA family. Homodimer.

It catalyses the reaction uridine(38/39/40) in tRNA = pseudouridine(38/39/40) in tRNA. In terms of biological role, formation of pseudouridine at positions 38, 39 and 40 in the anticodon stem and loop of transfer RNAs. The chain is tRNA pseudouridine synthase A from Neisseria gonorrhoeae (strain NCCP11945).